The sequence spans 346 residues: Ketol-acid reductoisomerase (NADP(+)) (346 aa).

Residues K1–S141 enclose the KARI N-terminal Rossmann domain. Residues S11 and D41–Q43 each bind NADP(+). H65 is a catalytic residue. An NADP(+)-binding site is contributed by G91. KARI C-terminal knotted domains are found at residues S142–E286 and Y287–I346. 4 residues coordinate Mg(2+): D150, E154, E322, and E326.

The protein belongs to the ketol-acid reductoisomerase family. Mg(2+) serves as cofactor.

The catalysed reaction is (2R)-2,3-dihydroxy-3-methylbutanoate + NADP(+) = (2S)-2-acetolactate + NADPH + H(+). The enzyme catalyses (2R,3R)-2,3-dihydroxy-3-methylpentanoate + NADP(+) = (S)-2-ethyl-2-hydroxy-3-oxobutanoate + NADPH + H(+). It participates in amino-acid biosynthesis; L-isoleucine biosynthesis; L-isoleucine from 2-oxobutanoate: step 2/4. It functions in the pathway amino-acid biosynthesis; L-valine biosynthesis; L-valine from pyruvate: step 2/4. Its function is as follows. Involved in the biosynthesis of branched-chain amino acids (BCAA). Catalyzes an alkyl-migration followed by a ketol-acid reduction of (S)-2-acetolactate (S2AL) to yield (R)-2,3-dihydroxy-isovalerate. In the isomerase reaction, S2AL is rearranged via a Mg-dependent methyl migration to produce 3-hydroxy-3-methyl-2-ketobutyrate (HMKB). In the reductase reaction, this 2-ketoacid undergoes a metal-dependent reduction by NADPH to yield (R)-2,3-dihydroxy-isovalerate. This is Ketol-acid reductoisomerase (NADP(+)) (ilvC) from Buchnera aphidicola subsp. Uroleucon rurale.